The sequence spans 596 residues: Arginine--tRNA ligase (596 aa).

Residues 128 to 138 (ANPTSSLHVGH) carry the 'HIGH' region motif.

Belongs to the class-I aminoacyl-tRNA synthetase family. As to quaternary structure, monomer.

The protein resides in the cytoplasm. It carries out the reaction tRNA(Arg) + L-arginine + ATP = L-arginyl-tRNA(Arg) + AMP + diphosphate. This is Arginine--tRNA ligase from Acinetobacter baumannii (strain AB307-0294).